The following is a 357-amino-acid chain: Spore coat protein I (357 aa).

Belongs to the CotS family.

The protein localises to the spore coat. This chain is Spore coat protein I (cotI), found in Bacillus subtilis (strain 168).